Here is a 251-residue protein sequence, read N- to C-terminus: Pyruvate formate-lyase-activating enzyme (251 aa).

One can recognise a Radical SAM core domain in the interval 15–244 (VDGPGLRYIL…KAAYRYVNFK (230 aa)). The [4Fe-4S] cluster site is built by Cys29, Cys33, and Cys36. Residues 35-37 (YCH), Gly79, 134-136 (DIK), and His207 contribute to the S-adenosyl-L-methionine site.

The protein belongs to the organic radical-activating enzymes family. It depends on [4Fe-4S] cluster as a cofactor.

The protein resides in the cytoplasm. It carries out the reaction glycyl-[formate C-acetyltransferase] + reduced [flavodoxin] + S-adenosyl-L-methionine = glycin-2-yl radical-[formate C-acetyltransferase] + semiquinone [flavodoxin] + 5'-deoxyadenosine + L-methionine + H(+). In terms of biological role, activation of pyruvate formate-lyase under anaerobic conditions by generation of an organic free radical, using S-adenosylmethionine and reduced flavodoxin as cosubstrates to produce 5'-deoxy-adenosine. This Staphylococcus aureus (strain N315) protein is Pyruvate formate-lyase-activating enzyme (pflA).